Here is a 464-residue protein sequence, read N- to C-terminus: Cysteine--tRNA ligase (464 aa).

Cys29 contacts Zn(2+). The 'HIGH' region motif lies at 31-41 (ATVQGDPHIGH). Residues Cys207, His232, and Glu236 each coordinate Zn(2+). The 'KMSKS' region motif lies at 263 to 267 (KMSKS). An ATP-binding site is contributed by Lys266.

Belongs to the class-I aminoacyl-tRNA synthetase family. In terms of assembly, monomer. Zn(2+) serves as cofactor.

It localises to the cytoplasm. The enzyme catalyses tRNA(Cys) + L-cysteine + ATP = L-cysteinyl-tRNA(Cys) + AMP + diphosphate. This is Cysteine--tRNA ligase from Rhodococcus jostii (strain RHA1).